The primary structure comprises 51 residues: Photosystem I reaction center subunit IX (51 aa).

A helical transmembrane segment spans residues 17-37 (FFSTAPVIALVFFTLTAGFLV).

This sequence belongs to the PsaJ family.

It localises to the cellular thylakoid membrane. In terms of biological role, may help in the organization of the PsaE and PsaF subunits. The protein is Photosystem I reaction center subunit IX of Acaryochloris marina (strain MBIC 11017).